The following is a 385-amino-acid chain: uncharacterized protein (385 aa).

Lys194 carries the N6-(pyridoxal phosphate)lysine modification.

This sequence belongs to the class-V pyridoxal-phosphate-dependent aminotransferase family. Pyridoxal 5'-phosphate is required as a cofactor.

This is an uncharacterized protein from Methanocaldococcus jannaschii (strain ATCC 43067 / DSM 2661 / JAL-1 / JCM 10045 / NBRC 100440) (Methanococcus jannaschii).